Reading from the N-terminus, the 258-residue chain is D-beta-hydroxybutyrate dehydrogenase (258 aa).

Position 8-32 (8-32) interacts with NAD(+); that stretch reads LVTGSTSGIGLGIAKALAAQGANII. S140 is a substrate binding site. The Proton acceptor role is filled by Y153.

It belongs to the short-chain dehydrogenases/reductases (SDR) family.

It catalyses the reaction (R)-3-hydroxybutanoate + NAD(+) = acetoacetate + NADH + H(+). This is D-beta-hydroxybutyrate dehydrogenase (hbdH1) from Cupriavidus necator (strain ATCC 17699 / DSM 428 / KCTC 22496 / NCIMB 10442 / H16 / Stanier 337) (Ralstonia eutropha).